A 29-amino-acid chain; its full sequence is Cytochrome b6-f complex subunit 8 (29 aa).

The helical transmembrane segment at 3–23 (IITFGWVAVAAFFALSIAFVV) threads the bilayer.

It belongs to the PetN family. As to quaternary structure, the 4 large subunits of the cytochrome b6-f complex are cytochrome b6, subunit IV (17 kDa polypeptide, PetD), cytochrome f and the Rieske protein, while the 4 small subunits are PetG, PetL, PetM and PetN. The complex functions as a dimer.

The protein resides in the cellular thylakoid membrane. Functionally, component of the cytochrome b6-f complex, which mediates electron transfer between photosystem II (PSII) and photosystem I (PSI), cyclic electron flow around PSI, and state transitions. This chain is Cytochrome b6-f complex subunit 8, found in Synechococcus sp. (strain JA-3-3Ab) (Cyanobacteria bacterium Yellowstone A-Prime).